Consider the following 160-residue polypeptide: Type-1 angiotensin II receptor-associated protein (160 aa).

Residues 1–9 are Extracellular-facing; sequence MELPAVNLK. A helical membrane pass occupies residues 10 to 30; it reads VILLVHWLLTTWGCLAFSGSY. The Cytoplasmic segment spans residues 31-53; it reads AWGNFTILALGVWAVAQRDSVDA. A helical membrane pass occupies residues 54–74; it reads IGMFLGGLVATIFLDIIYISI. Topologically, residues 75-86 are extracellular; that stretch reads FYSSVAVGDTGR. Residues 87-107 form a helical membrane-spanning segment; the sequence is FSAGMAIFSLLLKPFSCCLVY. Topologically, residues 108–160 are cytoplasmic; it reads HMHRERGGELPLRSDFFGPSQEHSAYQTIDSSDSPADPLASLENKGQAAPRGY. The segment at 110–122 is interaction with AGTR1; that stretch reads HRERGGELPLRSD. Ser-127 is subject to Phosphoserine. Residues 128-160 are disordered; it reads QEHSAYQTIDSSDSPADPLASLENKGQAAPRGY. Thr-135 bears the Phosphothreonine mark. Residues 137–149 are compositionally biased toward low complexity; that stretch reads DSSDSPADPLASL. The residue at position 138 (Ser-138) is a Phosphoserine.

In terms of assembly, interacts with RACK1, and with the carboxy-terminal region of AGTR1.

The protein resides in the endoplasmic reticulum membrane. It localises to the golgi apparatus membrane. It is found in the cytoplasmic vesicle membrane. Its function is as follows. Appears to be a negative regulator of type-1 angiotensin II receptor-mediated signaling by regulating receptor internalization as well as mechanism of receptor desensitization such as phosphorylation. May play a role of negative regulator in cardiomyocyte hypertrophy induced by angiotensin II through an inhibition of p38 mitogen-activated protein kinase pathway. Attenuates type-1 angiotensin II receptor growth promoting effect and angiotensin II-induced phosphorylation of protein kinase AKT and of STAT3. This is Type-1 angiotensin II receptor-associated protein (Agtrap) from Rattus norvegicus (Rat).